We begin with the raw amino-acid sequence, 428 residues long: Proline--tRNA ligase (428 aa).

This sequence belongs to the class-II aminoacyl-tRNA synthetase family. ProS type 2 subfamily. Homodimer.

The protein localises to the cytoplasm. It catalyses the reaction tRNA(Pro) + L-proline + ATP = L-prolyl-tRNA(Pro) + AMP + diphosphate. Catalyzes the attachment of proline to tRNA(Pro) in a two-step reaction: proline is first activated by ATP to form Pro-AMP and then transferred to the acceptor end of tRNA(Pro). The protein is Proline--tRNA ligase of Rickettsia typhi (strain ATCC VR-144 / Wilmington).